The chain runs to 494 residues: 3-octaprenyl-4-hydroxybenzoate carboxy-lyase (494 aa).

N172 provides a ligand contact to Mn(2+). Residues 175-177, 189-191, and 194-195 each bind prenylated FMN; these read IYR, RWL, and RG. Position 238 (E238) interacts with Mn(2+). The active-site Proton donor is D287.

It belongs to the UbiD family. As to quaternary structure, homohexamer. Prenylated FMN is required as a cofactor. Mn(2+) serves as cofactor.

The protein resides in the cell membrane. It carries out the reaction a 4-hydroxy-3-(all-trans-polyprenyl)benzoate + H(+) = a 2-(all-trans-polyprenyl)phenol + CO2. Its pathway is cofactor biosynthesis; ubiquinone biosynthesis. In terms of biological role, catalyzes the decarboxylation of 3-octaprenyl-4-hydroxy benzoate to 2-octaprenylphenol, an intermediate step in ubiquinone biosynthesis. The sequence is that of 3-octaprenyl-4-hydroxybenzoate carboxy-lyase from Shigella flexneri serotype 5b (strain 8401).